The chain runs to 299 residues: Acetylglutamate kinase (299 aa).

Substrate is bound by residues 70–71 (GG), Arg92, and Asn186.

Belongs to the acetylglutamate kinase family. ArgB subfamily.

The protein localises to the cytoplasm. It carries out the reaction N-acetyl-L-glutamate + ATP = N-acetyl-L-glutamyl 5-phosphate + ADP. The protein operates within amino-acid biosynthesis; L-arginine biosynthesis; N(2)-acetyl-L-ornithine from L-glutamate: step 2/4. Catalyzes the ATP-dependent phosphorylation of N-acetyl-L-glutamate. This chain is Acetylglutamate kinase, found in Petrotoga mobilis (strain DSM 10674 / SJ95).